Here is a 968-residue protein sequence, read N- to C-terminus: C-1-tetrahydrofolate synthase, cytoplasmic (968 aa).

Residues 1 to 338 (MSAQYQRFLK…ERLAKSQWAL (338 aa)) are methylenetetrahydrofolate dehydrogenase and cyclohydrolase. Residues 86 to 90 (YIRMK) and 133 to 135 (VQM) contribute to the substrate site. Residues 205 to 207 (GRS) and Ser230 contribute to the NADP(+) site. 305 to 309 (PGGVG) is a substrate binding site. The tract at residues 339 to 968 (QTLPLKPQRP…TETGEIEGLF (630 aa)) is formyltetrahydrofolate synthetase. 413–420 (TPLGEGKT) is an ATP binding site.

It in the N-terminal section; belongs to the tetrahydrofolate dehydrogenase/cyclohydrolase family. The protein in the C-terminal section; belongs to the formate--tetrahydrofolate ligase family. As to quaternary structure, homodimer. As to expression, present in all tissues.

It localises to the cytoplasm. The enzyme catalyses (6R)-5,10-methylene-5,6,7,8-tetrahydrofolate + NADP(+) = (6R)-5,10-methenyltetrahydrofolate + NADPH. It carries out the reaction (6R)-5,10-methenyltetrahydrofolate + H2O = (6R)-10-formyltetrahydrofolate + H(+). The catalysed reaction is (6S)-5,6,7,8-tetrahydrofolate + formate + ATP = (6R)-10-formyltetrahydrofolate + ADP + phosphate. It functions in the pathway one-carbon metabolism; tetrahydrofolate interconversion. The polypeptide is C-1-tetrahydrofolate synthase, cytoplasmic (pug) (Drosophila melanogaster (Fruit fly)).